Consider the following 174-residue polypeptide: Large ribosomal subunit protein uL10 (174 aa).

This sequence belongs to the universal ribosomal protein uL10 family. Part of the ribosomal stalk of the 50S ribosomal subunit. The N-terminus interacts with L11 and the large rRNA to form the base of the stalk. The C-terminus forms an elongated spine to which L12 dimers bind in a sequential fashion forming a multimeric L10(L12)X complex.

In terms of biological role, forms part of the ribosomal stalk, playing a central role in the interaction of the ribosome with GTP-bound translation factors. The polypeptide is Large ribosomal subunit protein uL10 (Syntrophus aciditrophicus (strain SB)).